Consider the following 478-residue polypeptide: Signal recognition particle receptor FtsY (478 aa).

Composition is skewed to basic and acidic residues over residues 14-33 (KDKA…ERGN) and 45-56 (AEAHDAVDKDPV). Residues 14–94 (KDKAETEERP…DAPLLPGAEL (81 aa)) form a disordered region. Over residues 71 to 86 (EAVDVAPAEDDEEEDA) the composition is skewed to acidic residues. Residues 283–290 (GVNGTGKT), 365–369 (DTAGR), and 429–432 (TKLD) each bind GTP.

It belongs to the GTP-binding SRP family. FtsY subfamily. In terms of assembly, part of the signal recognition particle protein translocation system, which is composed of SRP and FtsY. SRP is a ribonucleoprotein composed of Ffh and a 4.5S RNA molecule.

It is found in the cell inner membrane. The protein localises to the cytoplasm. The catalysed reaction is GTP + H2O = GDP + phosphate + H(+). Functionally, involved in targeting and insertion of nascent membrane proteins into the cytoplasmic membrane. Acts as a receptor for the complex formed by the signal recognition particle (SRP) and the ribosome-nascent chain (RNC). Interaction with SRP-RNC leads to the transfer of the RNC complex to the Sec translocase for insertion into the membrane, the hydrolysis of GTP by both Ffh and FtsY, and the dissociation of the SRP-FtsY complex into the individual components. This is Signal recognition particle receptor FtsY from Agrobacterium fabrum (strain C58 / ATCC 33970) (Agrobacterium tumefaciens (strain C58)).